Here is a 256-residue protein sequence, read N- to C-terminus: 3-hydroxy-5-phosphonooxypentane-2,4-dione thiolase (256 aa).

Residue Lys168 is the Schiff-base intermediate with substrate of the active site.

Belongs to the DeoC/FbaB aldolase family. As to quaternary structure, homodecamer.

It is found in the cytoplasm. The catalysed reaction is dihydroxyacetone phosphate + acetyl-CoA = 3-hydroxy-2,4-dioxopentyl phosphate + CoA. In terms of biological role, involved in the degradation of phospho-AI-2, thereby terminating induction of the lsr operon and closing the AI-2 signaling cycle. Catalyzes the transfer of an acetyl moiety from 3-hydroxy-5-phosphonooxypentane-2,4-dione to CoA to form glycerone phosphate and acetyl-CoA. The polypeptide is 3-hydroxy-5-phosphonooxypentane-2,4-dione thiolase (lsrF) (Shigella flexneri serotype 5b (strain 8401)).